The following is a 316-amino-acid chain: MNQLEGLKQFTTVVADSGDIESIRHYTPQDATTNPSLILKAASLTAYQPLFEDTLAYARKQGGTRETQIINASDKLAVNIGVEILKSVPGRVSTEVDARLSFDRGMCVAKARKLVALYQEQGIDKSRILIKLASTWEGIKAAEELEKEGINCNLTLLFSFAQARACAEAGVYLISPFVGRIYDWYNQRKPLDPYVADEDPGVVSVRKIYDYCKQHRYQTVIMGASFRKVEQILALAGCDRLTISTTLLEELHKADTRVERKLSPSTEGFHQPAPLSEPEFRWEHNQDAMAVDKLAEGIRQFAVDQQSLEDLLAAKL.

Lys-131 serves as the catalytic Schiff-base intermediate with substrate.

The protein belongs to the transaldolase family. Type 1 subfamily. In terms of assembly, homodimer.

The protein resides in the cytoplasm. It carries out the reaction D-sedoheptulose 7-phosphate + D-glyceraldehyde 3-phosphate = D-erythrose 4-phosphate + beta-D-fructose 6-phosphate. The protein operates within carbohydrate degradation; pentose phosphate pathway; D-glyceraldehyde 3-phosphate and beta-D-fructose 6-phosphate from D-ribose 5-phosphate and D-xylulose 5-phosphate (non-oxidative stage): step 2/3. Transaldolase is important for the balance of metabolites in the pentose-phosphate pathway. The protein is Transaldolase of Sodalis glossinidius (strain morsitans).